The chain runs to 460 residues: Telomere-binding protein homolog (460 aa).

It belongs to the telombin family.

The protein resides in the nucleus. It is found in the chromosome. It localises to the telomere. In terms of biological role, may bind telomeric T4G4 sequences. The protein is Telomere-binding protein homolog of Euplotes crassus.